The primary structure comprises 181 residues: Adenine phosphoribosyltransferase 2 (181 aa).

Serine 2 carries the N-acetylserine modification.

It belongs to the purine/pyrimidine phosphoribosyltransferase family.

The protein resides in the cytoplasm. It carries out the reaction AMP + diphosphate = 5-phospho-alpha-D-ribose 1-diphosphate + adenine. It participates in purine metabolism; AMP biosynthesis via salvage pathway; AMP from adenine: step 1/1. Its function is as follows. Catalyzes a salvage reaction resulting in the formation of AMP, that is energically less costly than de novo synthesis. May lack catalytic activity. In Saccharomyces cerevisiae (strain ATCC 204508 / S288c) (Baker's yeast), this protein is Adenine phosphoribosyltransferase 2 (APT2).